The chain runs to 1167 residues: DNA-directed RNA polymerase subunit beta (1167 aa).

The segment at 1-27 is disordered; that stretch reads MAVSPANQATAATTSAESRSEATGIPG. A compositionally biased stretch (low complexity) spans 9–23; that stretch reads ATAATTSAESRSEAT.

It belongs to the RNA polymerase beta chain family. The RNAP catalytic core consists of 2 alpha, 1 beta, 1 beta' and 1 omega subunit. When a sigma factor is associated with the core the holoenzyme is formed, which can initiate transcription.

The catalysed reaction is RNA(n) + a ribonucleoside 5'-triphosphate = RNA(n+1) + diphosphate. Functionally, DNA-dependent RNA polymerase catalyzes the transcription of DNA into RNA using the four ribonucleoside triphosphates as substrates. This chain is DNA-directed RNA polymerase subunit beta, found in Amycolatopsis mediterranei (strain S699) (Nocardia mediterranei).